The primary structure comprises 395 residues: L-rhamnonate dehydratase (395 aa).

Positions 23 and 49 each coordinate substrate. Residues Asp215, Glu241, and Glu269 each contribute to the Mg(2+) site. His319 serves as the catalytic Proton acceptor. Glu339 provides a ligand contact to substrate.

The protein belongs to the mandelate racemase/muconate lactonizing enzyme family. RhamD subfamily. In terms of assembly, homooctamer; tetramer of dimers. The cofactor is Mg(2+).

The catalysed reaction is L-rhamnonate = 2-dehydro-3-deoxy-L-rhamnonate + H2O. Functionally, catalyzes the dehydration of L-rhamnonate to 2-keto-3-deoxy-L-rhamnonate (KDR). The chain is L-rhamnonate dehydratase (rhmD) from Polaromonas sp. (strain JS666 / ATCC BAA-500).